The sequence spans 646 residues: Phosphomethylpyrimidine synthase (646 aa).

Substrate is bound by residues Asn235, Met264, Tyr293, His329, Ser349 to Gly351, Asp390 to Arg393, and Glu429. His433 lines the Zn(2+) pocket. Tyr456 is a substrate binding site. Residue His497 participates in Zn(2+) binding. Positions 577, 580, and 585 each coordinate [4Fe-4S] cluster. A disordered region spans residues Lys624–Glu646.

The protein belongs to the ThiC family. In terms of assembly, homodimer. The cofactor is [4Fe-4S] cluster.

The catalysed reaction is 5-amino-1-(5-phospho-beta-D-ribosyl)imidazole + S-adenosyl-L-methionine = 4-amino-2-methyl-5-(phosphooxymethyl)pyrimidine + CO + 5'-deoxyadenosine + formate + L-methionine + 3 H(+). Its pathway is cofactor biosynthesis; thiamine diphosphate biosynthesis. In terms of biological role, catalyzes the synthesis of the hydroxymethylpyrimidine phosphate (HMP-P) moiety of thiamine from aminoimidazole ribotide (AIR) in a radical S-adenosyl-L-methionine (SAM)-dependent reaction. The protein is Phosphomethylpyrimidine synthase of Vibrio parahaemolyticus serotype O3:K6 (strain RIMD 2210633).